The sequence spans 514 residues: Prolyl 3,4-dihydroxylase OGFOD1 (514 aa).

Residues glycine 114–threonine 221 enclose the Fe2OG dioxygenase domain. Fe cation is bound by residues histidine 132 and aspartate 134. Residue tyrosine 146 participates in 2-oxoglutarate binding. Histidine 200 provides a ligand contact to Fe cation. Position 212 (arginine 212) interacts with 2-oxoglutarate.

The protein belongs to the TPA1 family. As to quaternary structure, monomer and homodimer. Fe(2+) is required as a cofactor. L-ascorbate serves as cofactor.

It carries out the reaction [ribosomal protein uS12]-L-proline + 2-oxoglutarate + O2 = [ribosomal protein uS12]-(3S)-3-hydroxy-L-proline + succinate + CO2. It catalyses the reaction [ribosomal protein uS12]-(3S)-3-hydroxy-L-proline + 2-oxoglutarate + O2 = [ribosomal protein uS12]-(3S)-3,4-dihydroxy-L-proline + succinate + CO2. In terms of biological role, prolyl 3,4-dihydroxylase that catalyzes 3,4-dihydroxylation of 'Pro-61' of small ribosomal subunit uS12 (RPS23), thereby regulating protein translation termination efficiency. The sequence is that of Prolyl 3,4-dihydroxylase OGFOD1 (Ogd) from Ostreococcus tauri.